The primary structure comprises 134 residues: uncharacterized protein (134 aa).

3 consecutive transmembrane segments (helical) span residues Phe-8–Tyr-28, Gly-54–Leu-74, and Leu-113–Asp-133.

It belongs to the cornichon family.

It is found in the endoplasmic reticulum membrane. This is an uncharacterized protein from Schizosaccharomyces pombe (strain 972 / ATCC 24843) (Fission yeast).